Reading from the N-terminus, the 230-residue chain is Cytochrome c oxidase subunit 2 (230 aa).

Over 1–14 the chain is Mitochondrial intermembrane; the sequence is MAHPSQLGFQDAAS. The chain crosses the membrane as a helical span at residues 15-45; sequence PVMEELLHFHDHALMIVFLISTLVLYIIVAM. The Mitochondrial matrix portion of the chain corresponds to 46-59; the sequence is VSTKLTNKYILDSQ. The chain crosses the membrane as a helical span at residues 60-87; sequence EIEIIWTVLPAVILILIALPSLRILYLM. The Mitochondrial intermembrane portion of the chain corresponds to 88-230; it reads DEINDPHLTI…SWSSLMLEDA (143 aa). Residues H161, C196, E198, C200, H204, and M207 each contribute to the Cu cation site. Position 198 (E198) interacts with Mg(2+).

The protein belongs to the cytochrome c oxidase subunit 2 family. As to quaternary structure, component of the cytochrome c oxidase (complex IV, CIV), a multisubunit enzyme composed of 14 subunits. The complex is composed of a catalytic core of 3 subunits MT-CO1, MT-CO2 and MT-CO3, encoded in the mitochondrial DNA, and 11 supernumerary subunits COX4I, COX5A, COX5B, COX6A, COX6B, COX6C, COX7A, COX7B, COX7C, COX8 and NDUFA4, which are encoded in the nuclear genome. The complex exists as a monomer or a dimer and forms supercomplexes (SCs) in the inner mitochondrial membrane with NADH-ubiquinone oxidoreductase (complex I, CI) and ubiquinol-cytochrome c oxidoreductase (cytochrome b-c1 complex, complex III, CIII), resulting in different assemblies (supercomplex SCI(1)III(2)IV(1) and megacomplex MCI(2)III(2)IV(2)). Found in a complex with TMEM177, COA6, COX18, COX20, SCO1 and SCO2. Interacts with TMEM177 in a COX20-dependent manner. Interacts with COX20. Interacts with COX16. Cu cation serves as cofactor.

It localises to the mitochondrion inner membrane. The enzyme catalyses 4 Fe(II)-[cytochrome c] + O2 + 8 H(+)(in) = 4 Fe(III)-[cytochrome c] + 2 H2O + 4 H(+)(out). In terms of biological role, component of the cytochrome c oxidase, the last enzyme in the mitochondrial electron transport chain which drives oxidative phosphorylation. The respiratory chain contains 3 multisubunit complexes succinate dehydrogenase (complex II, CII), ubiquinol-cytochrome c oxidoreductase (cytochrome b-c1 complex, complex III, CIII) and cytochrome c oxidase (complex IV, CIV), that cooperate to transfer electrons derived from NADH and succinate to molecular oxygen, creating an electrochemical gradient over the inner membrane that drives transmembrane transport and the ATP synthase. Cytochrome c oxidase is the component of the respiratory chain that catalyzes the reduction of oxygen to water. Electrons originating from reduced cytochrome c in the intermembrane space (IMS) are transferred via the dinuclear copper A center (CU(A)) of subunit 2 and heme A of subunit 1 to the active site in subunit 1, a binuclear center (BNC) formed by heme A3 and copper B (CU(B)). The BNC reduces molecular oxygen to 2 water molecules using 4 electrons from cytochrome c in the IMS and 4 protons from the mitochondrial matrix. This chain is Cytochrome c oxidase subunit 2 (mt-co2), found in Gadus morhua (Atlantic cod).